Reading from the N-terminus, the 189-residue chain is Peptidyl-tRNA hydrolase (189 aa).

TRNA is bound at residue Y15. The Proton acceptor role is filled by H20. 3 residues coordinate tRNA: F66, N68, and N114.

It belongs to the PTH family. In terms of assembly, monomer.

The protein resides in the cytoplasm. It carries out the reaction an N-acyl-L-alpha-aminoacyl-tRNA + H2O = an N-acyl-L-amino acid + a tRNA + H(+). Hydrolyzes ribosome-free peptidyl-tRNAs (with 1 or more amino acids incorporated), which drop off the ribosome during protein synthesis, or as a result of ribosome stalling. In terms of biological role, catalyzes the release of premature peptidyl moieties from peptidyl-tRNA molecules trapped in stalled 50S ribosomal subunits, and thus maintains levels of free tRNAs and 50S ribosomes. In Dichelobacter nodosus (strain VCS1703A), this protein is Peptidyl-tRNA hydrolase.